A 543-amino-acid polypeptide reads, in one-letter code: Chaperonin GroEL (543 aa).

ATP-binding positions include Thr29–Pro32, Asp86–Thr90, Gly413, Asp477–Leu479, and Asp493.

Belongs to the chaperonin (HSP60) family. As to quaternary structure, forms a cylinder of 14 subunits composed of two heptameric rings stacked back-to-back. Interacts with the co-chaperonin GroES.

It localises to the cytoplasm. The enzyme catalyses ATP + H2O + a folded polypeptide = ADP + phosphate + an unfolded polypeptide.. Its function is as follows. Together with its co-chaperonin GroES, plays an essential role in assisting protein folding. The GroEL-GroES system forms a nano-cage that allows encapsulation of the non-native substrate proteins and provides a physical environment optimized to promote and accelerate protein folding. The chain is Chaperonin GroEL from Clostridium novyi (strain NT).